A 207-amino-acid polypeptide reads, in one-letter code: Outer-membrane lipoprotein LolB (207 aa).

The signal sequence occupies residues 1–21 (MPMRKRHFYRLLPLASLLLAA). Cys22 carries N-palmitoyl cysteine lipidation. A lipid anchor (S-diacylglycerol cysteine) is attached at Cys22.

Belongs to the LolB family. As to quaternary structure, monomer.

The protein resides in the cell outer membrane. Functionally, plays a critical role in the incorporation of lipoproteins in the outer membrane after they are released by the LolA protein. This Yersinia pseudotuberculosis serotype IB (strain PB1/+) protein is Outer-membrane lipoprotein LolB.